Here is a 314-residue protein sequence, read N- to C-terminus: L-lactate dehydrogenase (314 aa).

NAD(+) contacts are provided by residues V17, D38, K43, Y69, and 83 to 84 (GA). The substrate site is built by Q86 and R92. Residues S105, 122-124 (ASN), and S147 contribute to the NAD(+) site. 124-127 (NPVD) provides a ligand contact to substrate. 152 to 155 (DSAR) contributes to the substrate binding site. Beta-D-fructose 1,6-bisphosphate is bound by residues R157 and H172. Residue H179 is the Proton acceptor of the active site. Phosphotyrosine is present on Y223. T232 serves as a coordination point for substrate.

It belongs to the LDH/MDH superfamily. LDH family. As to quaternary structure, homotetramer.

The protein localises to the cytoplasm. The enzyme catalyses (S)-lactate + NAD(+) = pyruvate + NADH + H(+). It functions in the pathway fermentation; pyruvate fermentation to lactate; (S)-lactate from pyruvate: step 1/1. With respect to regulation, allosterically activated by fructose 1,6-bisphosphate (FBP). Catalyzes the conversion of lactate to pyruvate. The polypeptide is L-lactate dehydrogenase (Corynebacterium glutamicum (strain ATCC 13032 / DSM 20300 / JCM 1318 / BCRC 11384 / CCUG 27702 / LMG 3730 / NBRC 12168 / NCIMB 10025 / NRRL B-2784 / 534)).